The chain runs to 127 residues: Aspartate 1-decarboxylase (127 aa).

The Schiff-base intermediate with substrate; via pyruvic acid role is filled by serine 25. Serine 25 carries the pyruvic acid (Ser) modification. Threonine 57 contacts substrate. Residue tyrosine 58 is the Proton donor of the active site. 73–75 (GAA) provides a ligand contact to substrate.

It belongs to the PanD family. In terms of assembly, heterooctamer of four alpha and four beta subunits. Requires pyruvate as cofactor. Post-translationally, is synthesized initially as an inactive proenzyme, which is activated by self-cleavage at a specific serine bond to produce a beta-subunit with a hydroxyl group at its C-terminus and an alpha-subunit with a pyruvoyl group at its N-terminus.

Its subcellular location is the cytoplasm. It carries out the reaction L-aspartate + H(+) = beta-alanine + CO2. It participates in cofactor biosynthesis; (R)-pantothenate biosynthesis; beta-alanine from L-aspartate: step 1/1. Its function is as follows. Catalyzes the pyruvoyl-dependent decarboxylation of aspartate to produce beta-alanine. The chain is Aspartate 1-decarboxylase from Listeria innocua serovar 6a (strain ATCC BAA-680 / CLIP 11262).